Consider the following 579-residue polypeptide: Probable receptor-like serine/threonine-protein kinase At5g57670 (579 aa).

At T256 the chain carries Phosphothreonine. Positions 267-542 (FHQGNIVGIG…LLTNGNEAEI (276 aa)) constitute a Protein kinase domain. Residues 273 to 281 (VGIGGYSEV) and K295 each bind ATP. Residue D392 is the Proton acceptor of the active site. S396 carries the phosphoserine modification. The residue at position 432 (T432) is a Phosphothreonine.

It belongs to the protein kinase superfamily. Ser/Thr protein kinase family.

The catalysed reaction is L-seryl-[protein] + ATP = O-phospho-L-seryl-[protein] + ADP + H(+). The enzyme catalyses L-threonyl-[protein] + ATP = O-phospho-L-threonyl-[protein] + ADP + H(+). The sequence is that of Probable receptor-like serine/threonine-protein kinase At5g57670 from Arabidopsis thaliana (Mouse-ear cress).